Consider the following 1701-residue polypeptide: Merozoite surface protein 1 (1701 aa).

Residues 1 to 19 (MKIIFFLCSFLFFIINTQC) form the signal peptide. The segment covering 89-100 (GSGGSVASGGSG) has biased composition (gly residues). Positions 89–118 (GSGGSVASGGSGNSRRTNPSDNSSDSNTKT) are disordered. Residues 101–116 (NSRRTNPSDNSSDSNT) show a composition bias toward low complexity. N-linked (GlcNAc...) asparagine glycosylation is found at Asn-110 and Asn-239. Residues 322-344 (DAENPTTGSKPNPLPENKKKEVE) are disordered. Asn-470, Asn-536, and Asn-607 each carry an N-linked (GlcNAc...) asparagine glycan. Residues 704–739 (SETTEDGGHSTHTLSQSGETEVTEETEVTEETVGHT) are disordered. Residues 724-733 (EVTEETEVTE) show a composition bias toward acidic residues. 7 N-linked (GlcNAc...) asparagine glycosylation sites follow: Asn-802, Asn-899, Asn-919, Asn-965, Asn-991, Asn-1089, and Asn-1196. Low complexity predominate over residues 889–927 (TGTSSTSSPGNTTVNTAQSATHSNSQNQQSNASSTNTQN). Residues 889-936 (TGTSSTSSPGNTTVNTAQSATHSNSQNQQSNASSTNTQNGVAVSSGPA) are disordered. Disordered stretches follow at residues 1231–1259 (PPQP…TQIP) and 1451–1472 (KEKF…DEQK). The span at 1245 to 1259 (VSGSSGSTKEETQIP) shows a compositional bias: polar residues. Pro residues predominate over residues 1456 to 1465 (SSPPTTPPSP). A glycan (N-linked (GlcNAc...) asparagine) is linked at Asn-1588. EGF-like domains are found at residues 1592 to 1632 (HQCV…VENP) and 1633 to 1680 (NPTC…IFCS). 6 disulfide bridges follow: Cys-1594–Cys-1605, Cys-1599–Cys-1615, Cys-1617–Cys-1628, Cys-1636–Cys-1649, Cys-1643–Cys-1663, and Cys-1665–Cys-1679. The GPI-anchor amidated serine moiety is linked to residue Ser-1680. The propeptide at 1681-1701 (SSNFLGISFLLILMLILYSFI) is removed in mature form.

Forms a complex composed of subunits p83, p30, p38, and p42 which remain non-covalently associated; the complex is formed at the merozoite surface prior to egress from host erythrocytes. Forms a complex composed of processed MSP1 subunits, MSP6 subunit p36 and MSP7; the complex is formed at the merozoite surface prior to egress from host erythrocytes. Within the complex, interacts (via subunit p38) with MSP6 subunit p36 and (via subunits p83, p30 and p38) with MSP7 (via subunit p22). Forms a complex composed of MSP1, MSP6, DBLMSP1 and DBLMSP2. Within the complex, interacts (via subunit p38) with DBLMSP1 and DBLMSP2. Forms a complex composed of MSP1, and rhoptry proteins RhopH3, RAP1 and CLAG9/RhopH3. Within the complex, interacts (via subunits p42 and p19) with RhopH3 (via C-terminus). Forms a complex composed of MSP1, MSP6, MSP7, MSP9 and MSP3; within the complex, MSP6 and MSP9 mediate the binding to the host erythrocyte. Interacts (via subunits p19 and p42) with MSP9; the interaction is direct; MSP1 subunits p19 or p42, and MSP9 form a co-ligand complex that interacts with host SLC4A1/Band 3 protein. May interact with PFD6. Interacts with host spectrin. As to quaternary structure, interacts with host glycophorin GYPA in a sialic acid-independent manner. In terms of assembly, interacts with host proinflammatory cytokine S100P; the interaction blocks S100P inflammatory and chemotactic activities. Interacts with host SLC4A1/Band 3 (via 5ABC region) on the host erythrocyte surface in a sialic acid-independent manner. Post-translationally, the p190 precursor is cleaved by SUB1 prior to merozoite egress into 4 subunits p83, p30, p38, and p42 which remain non-covalently associated. SUB1-mediated proteolytic cleavage occurs in an orderly manner; the first cleavage occurs at the p30/p38 site, followed by cleavage at the p83/p30 site, in the 3D7 strain a second cleavage occurs at the N-terminus of p83, the last cleavage occurs at the p38/p42 site. The order of cleavage is essential for parasite viability. SUB1-mediated processing is essential for merozoite egress. In a second processing step during erythrocyte invasion, p42 is cleaved by SUB2 into p33 and p19; the latter remains attached to the merozoite surface via its GPI-anchor and is endocytosed during the subsequent ring stage.

It localises to the cell membrane. The protein resides in the secreted. Its subcellular location is the vacuole membrane. Functionally, during the asexual blood stage, involved in merozoite egress from host erythrocytes possibly via its interaction with the host cytoskeleton protein spectrin resulting in the destabilization of the host cytoskeleton and thus leading to erythrocyte cell membrane rupture. Involved in the binding to host erythrocytes and is required for host erythrocyte invasion. In terms of biological role, by binding to host proinflammatory cytokine S100P may interfere with host immune responses. Its function is as follows. Involved in merozoite invasion of host erythrocytes. May play a role in the biogenesis and/or function of the food vacuole during the intraerythrocytic development. The polypeptide is Merozoite surface protein 1 (Plasmodium falciparum (isolate FC27 / Papua New Guinea)).